Consider the following 536-residue polypeptide: Ribulokinase (536 aa).

It belongs to the ribulokinase family.

It carries out the reaction D-ribulose + ATP = D-ribulose 5-phosphate + ADP + H(+). The catalysed reaction is L-ribulose + ATP = L-ribulose 5-phosphate + ADP + H(+). The protein operates within carbohydrate degradation; L-arabinose degradation via L-ribulose; D-xylulose 5-phosphate from L-arabinose (bacterial route): step 2/3. The sequence is that of Ribulokinase from Staphylococcus epidermidis (strain ATCC 12228 / FDA PCI 1200).